The primary structure comprises 95 residues: Aspartyl/glutamyl-tRNA(Asn/Gln) amidotransferase subunit C (95 aa).

It belongs to the GatC family. As to quaternary structure, heterotrimer of A, B and C subunits.

It catalyses the reaction L-glutamyl-tRNA(Gln) + L-glutamine + ATP + H2O = L-glutaminyl-tRNA(Gln) + L-glutamate + ADP + phosphate + H(+). It carries out the reaction L-aspartyl-tRNA(Asn) + L-glutamine + ATP + H2O = L-asparaginyl-tRNA(Asn) + L-glutamate + ADP + phosphate + 2 H(+). Functionally, allows the formation of correctly charged Asn-tRNA(Asn) or Gln-tRNA(Gln) through the transamidation of misacylated Asp-tRNA(Asn) or Glu-tRNA(Gln) in organisms which lack either or both of asparaginyl-tRNA or glutaminyl-tRNA synthetases. The reaction takes place in the presence of glutamine and ATP through an activated phospho-Asp-tRNA(Asn) or phospho-Glu-tRNA(Gln). In Pseudomonas fluorescens (strain SBW25), this protein is Aspartyl/glutamyl-tRNA(Asn/Gln) amidotransferase subunit C.